Reading from the N-terminus, the 352-residue chain is Photosystem II D2 protein (352 aa).

A helical transmembrane segment spans residues 40-60; sequence TAYLALGGWLTGTTFVTSWYT. His-117 is a chlorophyll a binding site. A helical transmembrane segment spans residues 124–140; sequence GFMLRQFEIARLVGIRP. Pheophytin a contacts are provided by Gln-129 and Asn-142. Residues 152–165 traverse the membrane as a helical segment; it reads VFVSVFLIYPLGQS. His-197 serves as a coordination point for chlorophyll a. A helical membrane pass occupies residues 207–227; sequence GALLCAIHGATVENTLFEDGE. His-214 and Phe-261 together coordinate a plastoquinone. Residue His-214 participates in Fe cation binding. His-268 is a binding site for Fe cation. The chain crosses the membrane as a helical span at residues 278 to 294; sequence GLWTSSIGIIGLALNLR.

Belongs to the reaction center PufL/M/PsbA/D family. In terms of assembly, PSII is composed of 1 copy each of membrane proteins PsbA, PsbB, PsbC, PsbD, PsbE, PsbF, PsbH, PsbI, PsbJ, PsbK, PsbL, PsbM, PsbT, PsbX, PsbY, PsbZ, Psb30/Ycf12, at least 3 peripheral proteins of the oxygen-evolving complex and a large number of cofactors. It forms dimeric complexes. The cofactor is The D1/D2 heterodimer binds P680, chlorophylls that are the primary electron donor of PSII, and subsequent electron acceptors. It shares a non-heme iron and each subunit binds pheophytin, quinone, additional chlorophylls, carotenoids and lipids. There is also a Cl(-1) ion associated with D1 and D2, which is required for oxygen evolution. The PSII complex binds additional chlorophylls, carotenoids and specific lipids..

It is found in the plastid. The protein localises to the organellar chromatophore thylakoid membrane. It carries out the reaction 2 a plastoquinone + 4 hnu + 2 H2O = 2 a plastoquinol + O2. In terms of biological role, photosystem II (PSII) is a light-driven water:plastoquinone oxidoreductase that uses light energy to abstract electrons from H(2)O, generating O(2) and a proton gradient subsequently used for ATP formation. It consists of a core antenna complex that captures photons, and an electron transfer chain that converts photonic excitation into a charge separation. The D1/D2 (PsbA/PsbD) reaction center heterodimer binds P680, the primary electron donor of PSII as well as several subsequent electron acceptors. D2 is needed for assembly of a stable PSII complex. The chain is Photosystem II D2 protein from Paulinella chromatophora.